The chain runs to 400 residues: Pectinesterase B (400 aa).

Substrate-binding residues include T171 and Q205. Residue D228 is the Proton donor of the active site. Residue D261 is the Nucleophile of the active site. Substrate is bound by residues R325 and W327.

It belongs to the pectinesterase family.

The enzyme catalyses [(1-&gt;4)-alpha-D-galacturonosyl methyl ester](n) + n H2O = [(1-&gt;4)-alpha-D-galacturonosyl](n) + n methanol + n H(+). Its pathway is glycan metabolism; pectin degradation; 2-dehydro-3-deoxy-D-gluconate from pectin: step 1/5. In Pectobacterium parmentieri, this protein is Pectinesterase B (pemB).